Here is a 174-residue protein sequence, read N- to C-terminus: Gamma-crystallin D (174 aa).

Beta/gamma crystallin 'Greek key' domains follow at residues 2–40 and 41–83; these read GKIT…RVDS and GCWM…RIIP. Residues 84 to 87 form a connecting peptide region; sequence YSGS. Beta/gamma crystallin 'Greek key' domains lie at 88–128 and 129–171; these read HKMR…NVLD and GCWI…RRVI.

It belongs to the beta/gamma-crystallin family. In terms of assembly, monomer.

Its function is as follows. Crystallins are the dominant structural components of the vertebrate eye lens. The protein is Gamma-crystallin D (CRYGD) of Macropus fuliginosus (Western gray kangaroo).